A 1161-amino-acid chain; its full sequence is Nuclear pore complex-interacting protein family member B11 (1161 aa).

The chain crosses the membrane as a helical span at residues 63 to 87 (IIIAFPTSYKVVITLWIVYLWVSLL). 2 disordered regions span residues 278-580 (ADDN…DDNI) and 892-1161 (SADD…RRLS). Residues 311–321 (PLPPSAPPSAP) show a composition bias toward pro residues. Composition is skewed to basic and acidic residues over residues 368–378 (DNIKTTAERLR), 410–420 (DNIKTPAEHLR), 452–462 (DNIKTPAERLR), 494–504 (DNIKTPAEHLR), 536–546 (DNIKTTAEHLR), 918–928 (DNIKTPAERLR), 960–970 (DNIKTPAERLR), 1002–1012 (DNIKTPAERLR), and 1044–1054 (DNIKTPAERLR).

It belongs to the NPIP family.

It is found in the membrane. This Homo sapiens (Human) protein is Nuclear pore complex-interacting protein family member B11 (NPIPB11).